Reading from the N-terminus, the 429-residue chain is Nocturnin (429 aa).

A mitochondrion-targeting transit peptide spans 1-73 (MYQSPRRLCS…SMGNGTSRLY (73 aa)). The tract at residues 21–68 (RRTLVPGPRRTLAPPVLGSRPKSPQLQAAAASGAARSRPRTVSSMGNG) is disordered. Residue Glu-193 participates in Mg(2+) binding. Residues Glu-193, 217 to 219 (KPW), Asn-261, 284 to 287 (HLKA), and 322 to 324 (DFN) contribute to the substrate site. Residues 341 to 351 (NLNSAYKLLSP) form an interaction with PPARG region. His-412 serves as a coordination point for substrate.

This sequence belongs to the CCR4/nocturin family. In terms of assembly, interacts with PPARG. Mg(2+) serves as cofactor. Highly expressed in the differentiated adipocyte (at protein level). Ubiquitous.

The protein resides in the cytoplasm. The protein localises to the nucleus. It localises to the perinuclear region. Its subcellular location is the mitochondrion. It carries out the reaction NADP(+) + H2O = phosphate + NAD(+). The enzyme catalyses NADPH + H2O = phosphate + NADH. Functionally, phosphatase which catalyzes the conversion of NADP(+) to NAD(+) and of NADPH to NADH. Shows a small preference for NADPH over NADP(+). Represses translation and promotes degradation of target mRNA molecules. Plays an important role in post-transcriptional regulation of metabolic genes under circadian control. Exerts a rhythmic post-transcriptional control of genes necessary for metabolic functions including nutrient absorption, glucose/insulin sensitivity, lipid metabolism, adipogenesis, inflammation and osteogenesis. Plays an important role in favoring adipogenesis over osteoblastogenesis and acts as a key regulator of the adipogenesis/osteogenesis balance. Promotes adipogenesis by facilitating PPARG nuclear translocation which activates its transcriptional activity. Regulates circadian expression of NOS2 in the liver and negatively regulates the circadian expression of IGF1 in the bone. Critical for proper development of early embryos. In Mus musculus (Mouse), this protein is Nocturnin.